The following is a 268-amino-acid chain: Thiazole synthase (268 aa).

Lysine 108 functions as the Schiff-base intermediate with DXP in the catalytic mechanism. 1-deoxy-D-xylulose 5-phosphate contacts are provided by residues glycine 169, 195–196 (AG), and 217–218 (NS). A disordered region spans residues 248-268 (RLKENPLASPSSPLEGVISNN). A compositionally biased stretch (polar residues) spans 255–268 (ASPSSPLEGVISNN).

It belongs to the ThiG family. In terms of assembly, homotetramer. Forms heterodimers with either ThiH or ThiS.

It is found in the cytoplasm. The enzyme catalyses [ThiS sulfur-carrier protein]-C-terminal-Gly-aminoethanethioate + 2-iminoacetate + 1-deoxy-D-xylulose 5-phosphate = [ThiS sulfur-carrier protein]-C-terminal Gly-Gly + 2-[(2R,5Z)-2-carboxy-4-methylthiazol-5(2H)-ylidene]ethyl phosphate + 2 H2O + H(+). It functions in the pathway cofactor biosynthesis; thiamine diphosphate biosynthesis. Catalyzes the rearrangement of 1-deoxy-D-xylulose 5-phosphate (DXP) to produce the thiazole phosphate moiety of thiamine. Sulfur is provided by the thiocarboxylate moiety of the carrier protein ThiS. In vitro, sulfur can be provided by H(2)S. This Prochlorococcus marinus (strain NATL1A) protein is Thiazole synthase.